A 187-amino-acid polypeptide reads, in one-letter code: Core-binding factor subunit beta (187 aa).

The residue at position 10 (Ser-10) is a Phosphoserine; by CK2. The disordered stretch occupies residues 139–187; that stretch reads AQQAFEEARRRTREFEDRDRSHREEMEARRQQDPSPGSNLGGGDDLKLR. The segment covering 144 to 170 has biased composition (basic and acidic residues); sequence EEARRRTREFEDRDRSHREEMEARRQQ. Ser-159 is modified (phosphoserine; by PKC).

Belongs to the CBF-beta family. In terms of assembly, heterodimer with RUNX1, RUNX2 and RUNX3. Interacts with COPRS. Found in a complex with PRMT5 and RUNX1. As to expression, expressed in all tissues tested. Highest level in thymus, but also abundantly expressed in muscle, lung and brain.

The protein resides in the nucleus. In terms of biological role, forms the heterodimeric complex core-binding factor (CBF) with RUNX family proteins (RUNX1, RUNX2, and RUNX3). RUNX members modulate the transcription of their target genes through recognizing the core consensus binding sequence 5'-TGTGGT-3', or very rarely, 5'-TGCGGT-3', within their regulatory regions via their runt domain, while CBFB is a non-DNA-binding regulatory subunit that allosterically enhances the sequence-specific DNA-binding capacity of RUNX. The heterodimers bind to the core site of a number of enhancers and promoters, including murine leukemia virus, polyomavirus enhancer, T-cell receptor enhancers, LCK, IL3 and GM-CSF promoters. CBF complexes repress ZBTB7B transcription factor during cytotoxic (CD8+) T cell development. They bind to RUNX-binding sequence within the ZBTB7B locus acting as transcriptional silencer and allowing for cytotoxic T cell differentiation. The sequence is that of Core-binding factor subunit beta (Cbfb) from Mus musculus (Mouse).